The sequence spans 287 residues: 2-dehydro-3-deoxyphosphooctonate aldolase (287 aa).

It belongs to the KdsA family.

It localises to the cytoplasm. It carries out the reaction D-arabinose 5-phosphate + phosphoenolpyruvate + H2O = 3-deoxy-alpha-D-manno-2-octulosonate-8-phosphate + phosphate. It functions in the pathway carbohydrate biosynthesis; 3-deoxy-D-manno-octulosonate biosynthesis; 3-deoxy-D-manno-octulosonate from D-ribulose 5-phosphate: step 2/3. It participates in bacterial outer membrane biogenesis; lipopolysaccharide biosynthesis. This Rhodopseudomonas palustris (strain BisB5) protein is 2-dehydro-3-deoxyphosphooctonate aldolase.